A 270-amino-acid chain; its full sequence is SPbeta prophage-derived DNA ligase-like protein LigB (270 aa).

Lys25 functions as the N6-AMP-lysine intermediate in the catalytic mechanism.

The protein belongs to the ATP-dependent DNA ligase family.

The protein is SPbeta prophage-derived DNA ligase-like protein LigB (ligB) of Bacillus subtilis (strain 168).